Reading from the N-terminus, the 526-residue chain is Microphthalmia-associated transcription factor (526 aa).

The tract at residues 20–54 (EPKTYYELKSQPLKSSSSAEHSGASKPPLSSSTMT) is disordered. Residues 34–44 (SSSSAEHSGAS) show a composition bias toward low complexity. Serine 180 carries the phosphoserine; by MAPK modification. Lysine 289 is covalently cross-linked (Glycyl lysine isopeptide (Lys-Gly) (interchain with G-Cter in SUMO)). A bHLH domain is found at 311–364 (QKKDNHNLIERRRRFNINDRIKELGTLIPKSNDPDMRWNKGTILKASVDYIRKL). Residues 355 to 401 (KASVDYIRKLQREQQRAKDLENRQKKLEHANRHLLLRVQELEMQARA) adopt a coiled-coil conformation. The tract at residues 374-395 (LENRQKKLEHANRHLLLRVQEL) is leucine-zipper. Serine 405 is modified (phosphoserine; by GSK3). At serine 414 the chain carries Phosphoserine. A Glycyl lysine isopeptide (Lys-Gly) (interchain with G-Cter in SUMO) cross-link involves residue lysine 423. Phosphoserine is present on serine 491. A disordered region spans residues 496–526 (TDPLLSSVSPGASKTSSRRSSMSAEETEHAC). The span at 507–519 (ASKTSSRRSSMSA) shows a compositional bias: low complexity. At serine 516 the chain carries Phosphoserine; by RPS6KA1.

This sequence belongs to the MiT/TFE family. Homodimer or heterodimer; dimerization is mediated via the coiled coil region. Efficient DNA binding requires dimerization with another bHLH protein. Binds DNA in the form of homodimer or heterodimer with either TFE3, TFEB or TFEC. Identified in a complex with HINT1 and CTNNB1. Interacts with KARS1. Interacts with VSX2. Phosphorylation at Ser-405 significantly enhances the ability to bind the tyrosinase promoter. Phosphorylated at Ser-180 and Ser-516 following KIT signaling, triggering a short live activation: Phosphorylation at Ser-180 and Ser-516 by MAPK and RPS6KA1, respectively, activate the transcription factor activity but also promote ubiquitination and subsequent degradation by the proteasome. Phosphorylated in response to blue light (415nm). In terms of processing, ubiquitinated following phosphorylation at Ser-180, leading to subsequent degradation by the proteasome. Deubiquitinated by USP13, preventing its degradation.

Its subcellular location is the nucleus. The protein localises to the cytoplasm. In terms of biological role, transcription factor that regulates the expression of genes with essential roles in cell differentiation, proliferation and survival. Binds to M-boxes (5'-TCATGTG-3') and symmetrical DNA sequences (E-boxes) (5'-CACGTG-3') found in the promoters of target genes, such as BCL2 and tyrosinase (TYR). Plays an important role in melanocyte development by regulating the expression of tyrosinase (TYR) and tyrosinase-related protein 1 (TYRP1). Plays a critical role in the differentiation of various cell types, such as neural crest-derived melanocytes, mast cells, osteoclasts and optic cup-derived retinal pigment epithelium. This is Microphthalmia-associated transcription factor (Mitf) from Rattus norvegicus (Rat).